The sequence spans 178 residues: Caveolin-1 (178 aa).

Ser2 is modified (N-acetylserine). Ser2 carries the phosphoserine modification. Residues 2–94 (SGGKYVDSEG…WKASFTTFTV (93 aa)) form a required for homooligomerization region. The Cytoplasmic portion of the chain corresponds to 2-104 (SGGKYVDSEG…TKYWFYRLLS (103 aa)). Lys5 bears the N6-acetyllysine; alternate mark. Lys5 participates in a covalent cross-link: Glycyl lysine isopeptide (Lys-Gly) (interchain with G-Cter in ubiquitin); alternate. Tyr6 is subject to Phosphotyrosine. At Ser9 the chain carries Phosphoserine. Tyr14 carries the phosphotyrosine; by ABL1 modification. Tyr25 is subject to Phosphotyrosine. Glycyl lysine isopeptide (Lys-Gly) (interchain with G-Cter in ubiquitin) cross-links involve residues Lys26, Lys30, Lys39, Lys47, and Lys57. Residues 82-94 (DGIWKASFTTFTV) form an interaction with CAVIN3 region. An intramembrane region (helical) is located at residues 105–125 (ALFGIPMALIWGIYFAILSFL). Residues 126–178 (HIWAVVPCIKSFLIEIQCISRVYSIYVHTFCDPFFEAVGKIFSNIRINMQKEI) are Cytoplasmic-facing. The interval 131–142 (VPCIKSFLIEIQ) is interacts with SPRY1, SPRY2, SPRY3 and SPRY4. S-palmitoyl cysteine attachment occurs at residues Cys133, Cys143, and Cys156. The interacts with SPRY1, SPRY2, and SPRY4 stretch occupies residues 149–160 (SIYVHTFCDPFF). The segment at 167 to 178 (FSNIRINMQKEI) is interacts with SPRY1, SPRY2, SPRY3 and SPRY4.

The protein belongs to the caveolin family. In terms of assembly, homooligomer. Interacts with GLIPR2. Interacts with NOSTRIN. Interacts with SNAP25 and STX1A. Interacts (via the N-terminus) with DPP4; the interaction is direct. Interacts with CTNNB1, CDH1 and JUP. Interacts with PACSIN2; this interaction induces membrane tubulation. Interacts with SLC7A9. Interacts with BMX and BTK. Interacts with TGFBR1. Interacts with CAVIN3 (via leucine-zipper domain) in a cholesterol-sensitive manner. Interacts with CAVIN1. Interacts with EHD2 in a cholesterol-dependent manner. Forms a ternary complex with UBXN6 and VCP; mediates CAV1 targeting to lysosomes for degradation. Interacts with ABCG1; this interaction regulates ABCG1-mediated cholesterol efflux. Interacts with NEU3; this interaction enhances NEU3 sialidase activity within caveola. Interacts (via C-terminus) with SPRY1, SPRY2 (via C-terminus), SPRY3, and SPRY4. Interacts with IGFBP5; this interaction allows trafficking of IGFBP5 from the plasma membrane to the nucleus. In terms of processing, phosphorylated at Tyr-14 by ABL1 in response to oxidative stress. Post-translationally, ubiquitinated. Undergo monoubiquitination and multi- and/or polyubiquitination. Monoubiquitination of N-terminal lysines promotes integration in a ternary complex with UBXN6 and VCP which promotes oligomeric CAV1 targeting to lysosomes for degradation. Ubiquitinated by ZNRF1; leading to degradation and modulation of the TLR4-mediated immune response.

Its subcellular location is the golgi apparatus membrane. It localises to the cell membrane. The protein resides in the membrane. It is found in the caveola. The protein localises to the membrane raft. May act as a scaffolding protein within caveolar membranes. Forms a stable heterooligomeric complex with CAV2 that targets to lipid rafts and drives caveolae formation. Mediates the recruitment of CAVIN proteins (CAVIN1/2/3/4) to the caveolae. Interacts directly with G-protein alpha subunits and can functionally regulate their activity. Involved in the costimulatory signal essential for T-cell receptor (TCR)-mediated T-cell activation. Its binding to DPP4 induces T-cell proliferation and NF-kappa-B activation in a T-cell receptor/CD3-dependent manner. Recruits CTNNB1 to caveolar membranes and may regulate CTNNB1-mediated signaling through the Wnt pathway. Negatively regulates TGFB1-mediated activation of SMAD2/3 by mediating the internalization of TGFBR1 from membrane rafts leading to its subsequent degradation. Binds 20(S)-hydroxycholesterol (20(S)-OHC). The sequence is that of Caveolin-1 (CAV1) from Felis catus (Cat).